A 286-amino-acid chain; its full sequence is ATP synthase gamma chain (286 aa).

It belongs to the ATPase gamma chain family. In terms of assembly, F-type ATPases have 2 components, CF(1) - the catalytic core - and CF(0) - the membrane proton channel. CF(1) has five subunits: alpha(3), beta(3), gamma(1), delta(1), epsilon(1). CF(0) has three main subunits: a, b and c.

The protein resides in the cell inner membrane. Its function is as follows. Produces ATP from ADP in the presence of a proton gradient across the membrane. The gamma chain is believed to be important in regulating ATPase activity and the flow of protons through the CF(0) complex. The polypeptide is ATP synthase gamma chain (Shewanella woodyi (strain ATCC 51908 / MS32)).